A 479-amino-acid chain; its full sequence is Inhibitory synaptic factor 2A (479 aa).

Ser177 is subject to Phosphoserine. Disordered regions lie at residues 226-247 (GRAKQDRGRPNSEEPAPPALRR) and 315-338 (SPECSEQPSQTHTPPGLGNQPSPT). Over residues 228 to 237 (AKQDRGRPNS) the composition is skewed to basic and acidic residues. Positions 318-337 (CSEQPSQTHTPPGLGNQPSP) are enriched in polar residues. Residues 353 to 379 (TEVVDLKAQLQMMENLISSSQETIKVL) adopt a coiled-coil conformation. The segment covering 449-461 (SPYSQETYSSTPK) has biased composition (polar residues). Positions 449–472 (SPYSQETYSSTPKQKSKTESKKHG) are disordered.

The protein belongs to the INSYN2 family. In terms of assembly, interacts with GPHN.

The protein localises to the postsynaptic density. Functionally, component of the protein machinery at the inhibitory synapses, probably acting as a scaffold. Inhibitory synapses dampen neuronal activity through postsynaptic hyperpolarization. This synaptic inhibition is fundamental for the functioning of the central nervous system, shaping and orchestrating the flow of information through neuronal networks to generate a precise neural code. In Homo sapiens (Human), this protein is Inhibitory synaptic factor 2A.